The primary structure comprises 102 residues: Small ribosomal subunit protein uS10 (102 aa).

Belongs to the universal ribosomal protein uS10 family. In terms of assembly, part of the 30S ribosomal subunit.

Functionally, involved in the binding of tRNA to the ribosomes. This Caulobacter sp. (strain K31) protein is Small ribosomal subunit protein uS10.